Here is a 231-residue protein sequence, read N- to C-terminus: Putative cobalt transport protein CbiM 1 (231 aa).

6 helical membrane-spanning segments follow: residues 9 to 29 (PGPW…YGIF), 41 to 61 (VLPL…LKLP), 74 to 94 (GMAV…IVLL), 107 to 127 (TFGA…YAIY), 135 to 155 (VNFY…TYVV), and 181 to 201 (VFAI…TLLF).

Belongs to the CbiM family. In terms of assembly, forms an energy-coupling factor (ECF) transporter complex composed of an ATP-binding protein (A component, CbiO), a transmembrane protein (T component, CbiQ) and 2 possible substrate-capture proteins (S components, CbiM and CbiN) of unknown stoichimetry.

It is found in the cell membrane. It participates in cofactor biosynthesis; adenosylcobalamin biosynthesis. In terms of biological role, part of the energy-coupling factor (ECF) transporter complex CbiMNOQ involved in cobalt import. This chain is Putative cobalt transport protein CbiM 1, found in Methanosarcina barkeri (strain Fusaro / DSM 804).